We begin with the raw amino-acid sequence, 414 residues long: Tryptophan synthase beta chain (414 aa).

The segment at 1–28 is disordered; the sequence is MVSTISRQDQNNNDDLNQPSKEGRFGKY. Low complexity predominate over residues 8-18; sequence QDQNNNDDLNQ. The residue at position 108 (K108) is an N6-(pyridoxal phosphate)lysine.

It belongs to the TrpB family. Tetramer of two alpha and two beta chains. It depends on pyridoxal 5'-phosphate as a cofactor.

It catalyses the reaction (1S,2R)-1-C-(indol-3-yl)glycerol 3-phosphate + L-serine = D-glyceraldehyde 3-phosphate + L-tryptophan + H2O. It functions in the pathway amino-acid biosynthesis; L-tryptophan biosynthesis; L-tryptophan from chorismate: step 5/5. Its function is as follows. The beta subunit is responsible for the synthesis of L-tryptophan from indole and L-serine. In Prochlorococcus marinus subsp. pastoris (strain CCMP1986 / NIES-2087 / MED4), this protein is Tryptophan synthase beta chain.